Consider the following 311-residue polypeptide: MAKSPQQPVIQSILDDAYHKFENDTSGKNADYIPALAKVDSAYFGLAVVTPHGKIYTKGDVSQPFSIQSISKVFTLALAMEQKGPQTIVDKIGVNATGLAFNSVTAIELNKARSVNPLVNAGAIATVSLLDGKNEKAKWSALSAWYDKFANRKLSVLEDVYKSESDTNGHNRAIAELLTSYDRFYGDVDLNLAIYTRQCSVAVTTKDLAVMASVFANNGVHPLTDKRLMSSDNVSRVLAVMTTAGLYENSGQWAYQVGLPAKSGVGGGIIAVSPGKFAVAVFSPRLDSAGNSIRAQKAIDYIAEKLHANIF.

Positions 69, 120, 164, 171, 195, 247, and 265 each coordinate substrate.

Belongs to the glutaminase family. As to quaternary structure, homotetramer.

It catalyses the reaction L-glutamine + H2O = L-glutamate + NH4(+). The protein is Glutaminase of Colwellia psychrerythraea (strain 34H / ATCC BAA-681) (Vibrio psychroerythus).